A 141-amino-acid chain; its full sequence is Holo-[acyl-carrier-protein] synthase (141 aa).

Mg(2+)-binding residues include Asp-8 and Glu-61.

It belongs to the P-Pant transferase superfamily. AcpS family. The cofactor is Mg(2+).

It is found in the cytoplasm. It catalyses the reaction apo-[ACP] + CoA = holo-[ACP] + adenosine 3',5'-bisphosphate + H(+). Its function is as follows. Transfers the 4'-phosphopantetheine moiety from coenzyme A to a Ser of acyl-carrier-protein. This Rhodopseudomonas palustris (strain HaA2) protein is Holo-[acyl-carrier-protein] synthase.